A 336-amino-acid chain; its full sequence is Ornithine carbamoyltransferase, catabolic (336 aa).

Residues 57-60 (STRT), glutamine 84, arginine 108, and 135-138 (HPTQ) contribute to the carbamoyl phosphate site. Residues asparagine 168, aspartate 232, and 236–237 (SM) contribute to the L-ornithine site. Carbamoyl phosphate contacts are provided by residues 274-275 (CL) and arginine 321.

It belongs to the aspartate/ornithine carbamoyltransferase superfamily. OTCase family.

Its subcellular location is the cytoplasm. The catalysed reaction is carbamoyl phosphate + L-ornithine = L-citrulline + phosphate + H(+). The protein operates within amino-acid degradation; L-arginine degradation via ADI pathway; carbamoyl phosphate from L-arginine: step 2/2. Reversibly catalyzes the transfer of the carbamoyl group from carbamoyl phosphate (CP) to the N(epsilon) atom of ornithine (ORN) to produce L-citrulline. The sequence is that of Ornithine carbamoyltransferase, catabolic (arcB) from Ectopseudomonas mendocina (Pseudomonas mendocina).